Reading from the N-terminus, the 294-residue chain is Bifunctional protein FolD (294 aa).

NADP(+)-binding positions include 166–168, serine 191, and isoleucine 232; that span reads GRS.

It belongs to the tetrahydrofolate dehydrogenase/cyclohydrolase family. In terms of assembly, homodimer.

The catalysed reaction is (6R)-5,10-methylene-5,6,7,8-tetrahydrofolate + NADP(+) = (6R)-5,10-methenyltetrahydrofolate + NADPH. It carries out the reaction (6R)-5,10-methenyltetrahydrofolate + H2O = (6R)-10-formyltetrahydrofolate + H(+). The protein operates within one-carbon metabolism; tetrahydrofolate interconversion. Its function is as follows. Catalyzes the oxidation of 5,10-methylenetetrahydrofolate to 5,10-methenyltetrahydrofolate and then the hydrolysis of 5,10-methenyltetrahydrofolate to 10-formyltetrahydrofolate. The polypeptide is Bifunctional protein FolD (Afipia carboxidovorans (strain ATCC 49405 / DSM 1227 / KCTC 32145 / OM5) (Oligotropha carboxidovorans)).